A 123-amino-acid polypeptide reads, in one-letter code: U13-hexatoxin-Hi1a (123 aa).

The N-terminal stretch at 1–20 is a signal peptide; the sequence is MEMSLRVALFFAFWVCLTTG. BPTI/Kunitz inhibitor domains are found at residues 26-76 and 86-123; these read CYQE…ERTC and CSLE…GGNV. Intrachain disulfides connect C26–C76, C35–C59, C51–C72, C86–C111, and C95–C119.

Belongs to the venom Kunitz-type family. 02 (native) subfamily. In terms of tissue distribution, expressed by the venom gland.

The protein localises to the secreted. Functionally, dual-function toxin that inhibits both serine proteases and voltage-gated potassium channels (Kv). This is U13-hexatoxin-Hi1a from Hadronyche infensa (Fraser island funnel-web spider).